The primary structure comprises 43 residues: Histone H3 (43 aa).

In terms of assembly, the nucleosome is a histone octamer containing two molecules each of H2A, H2B, H3 and H4 assembled in one H3-H4 heterotetramer and two H2A-H2B heterodimers. The octamer wraps approximately 147 bp of DNA.

Its subcellular location is the nucleus. It is found in the chromosome. Its function is as follows. Core component of nucleosome. Nucleosomes wrap and compact DNA into chromatin, limiting DNA accessibility to the cellular machineries which require DNA as a template. Histones thereby play a central role in transcription regulation, DNA repair, DNA replication and chromosomal stability. DNA accessibility is regulated via a complex set of post-translational modifications of histones, also called histone code, and nucleosome remodeling. This chain is Histone H3, found in Penaeus vannamei (Whiteleg shrimp).